The primary structure comprises 350 residues: Farnesyl pyrophosphate synthase (350 aa).

Isopentenyl diphosphate contacts are provided by Lys55, Arg58, and Gln94. Positions 101 and 105 each coordinate Mg(2+). Arg110 provides a ligand contact to dimethylallyl diphosphate. An isopentenyl diphosphate-binding site is contributed by Arg111. Residues Lys198, Thr199, Gln237, Lys254, and Lys263 each contribute to the dimethylallyl diphosphate site.

The protein belongs to the FPP/GGPP synthase family. Mg(2+) is required as a cofactor.

Its subcellular location is the cytoplasm. It carries out the reaction isopentenyl diphosphate + dimethylallyl diphosphate = (2E)-geranyl diphosphate + diphosphate. The catalysed reaction is isopentenyl diphosphate + (2E)-geranyl diphosphate = (2E,6E)-farnesyl diphosphate + diphosphate. The protein operates within isoprenoid biosynthesis; farnesyl diphosphate biosynthesis; farnesyl diphosphate from geranyl diphosphate and isopentenyl diphosphate: step 1/1. It functions in the pathway isoprenoid biosynthesis; geranyl diphosphate biosynthesis; geranyl diphosphate from dimethylallyl diphosphate and isopentenyl diphosphate: step 1/1. In terms of biological role, catalyzes the sequential condensation of isopentenyl pyrophosphate with the allylic pyrophosphates, dimethylallyl pyrophosphate, and then with the resultant geranylpyrophosphate to the ultimate product farnesyl pyrophosphate. The polypeptide is Farnesyl pyrophosphate synthase (FPS) (Zea mays (Maize)).